The chain runs to 381 residues: E3 ubiquitin-protein ligase RNF34 (381 aa).

The FYVE-type zinc-finger motif lies at 56-107; the sequence is EGPNIVCKACGLSFSVFRKKHVCCDCKKDFCSLCSVSQENLRRCSTCHLLQE. One can recognise an SAP 1 domain in the interval 115–134; the sequence is LMRLKVKDLRQYLLLRNVPT. The residue at position 169 (S169) is a Phosphoserine. The segment at 216-261 is disordered; that stretch reads LASANTDDEDGEEDDDDDDDDDDEDDDEQEENLEEQNPGLSKKKAR. Over residues 221–249 the composition is skewed to acidic residues; that stretch reads TDDEDGEEDDDDDDDDDDEDDDEQEENLE. Residues S263 and S265 each carry the phosphoserine modification. The SAP 2 domain occupies 273–287; that stretch reads VEGMSVRQLKEILAR. The RING-type zinc finger occupies 334–369; sequence CRICMDAVIDCVLLECGHMVTCTKCGKRMSECPICR.

Interacts with CASP8 and CASP10. Interacts with p53/TP53; involved in p53/TP53 ubiquitination. Interacts (via RING-type zinc finger) with MDM2; the interaction stabilizes MDM2. Interacts (via RING-type zinc finger) with PPARGC1A. Interacts with NOD1. In terms of processing, proteolytically cleaved by caspases upon induction of apoptosis by TNF. Post-translationally, autoubiquitinated (in vitro). In terms of tissue distribution, ubiquitous. Detected in brain, cerebellum, midbrain, hippocampus, striatum, heart, lung, kidney, muscle, spleen and testis.

The protein localises to the cell membrane. It is found in the endomembrane system. The protein resides in the nucleus. Its subcellular location is the nucleus speckle. It localises to the cytoplasm. The protein localises to the cytosol. The enzyme catalyses S-ubiquitinyl-[E2 ubiquitin-conjugating enzyme]-L-cysteine + [acceptor protein]-L-lysine = [E2 ubiquitin-conjugating enzyme]-L-cysteine + N(6)-ubiquitinyl-[acceptor protein]-L-lysine.. The protein operates within protein modification; protein ubiquitination. In terms of biological role, E3 ubiquitin-protein ligase that regulates several biological processes through the ubiquitin-mediated proteasomal degradation of various target proteins. Ubiquitinates the caspases CASP8 and CASP10, promoting their proteasomal degradation, to negatively regulate cell death downstream of death domain receptors in the extrinsic pathway of apoptosis. May mediate 'Lys-48'-linked polyubiquitination of RIPK1 and its subsequent proteasomal degradation thereby indirectly regulating the tumor necrosis factor-mediated signaling pathway. Negatively regulates p53/TP53 through its direct ubiquitination and targeting to proteasomal degradation. Indirectly, may also negatively regulate p53/TP53 through ubiquitination and degradation of SFN. Mediates PPARGC1A proteasomal degradation probably through ubiquitination thereby indirectly regulating the metabolism of brown fat cells. Possibly involved in innate immunity, through 'Lys-48'-linked polyubiquitination of NOD1 and its subsequent proteasomal degradation. This is E3 ubiquitin-protein ligase RNF34 from Rattus norvegicus (Rat).